Consider the following 213-residue polypeptide: Ribonuclease T (213 aa).

The 175-residue stretch at 28-202 (VVVDVETGGF…YDTEQTARLF (175 aa)) folds into the Exonuclease domain. Aspartate 31, glutamate 33, histidine 189, and aspartate 194 together coordinate Mg(2+). The active-site Proton donor/acceptor is the histidine 189.

Belongs to the RNase T family. In terms of assembly, homodimer. Requires Mg(2+) as cofactor.

Trims short 3' overhangs of a variety of RNA species, leaving a one or two nucleotide 3' overhang. Responsible for the end-turnover of tRNA: specifically removes the terminal AMP residue from uncharged tRNA (tRNA-C-C-A). Also appears to be involved in tRNA biosynthesis. This chain is Ribonuclease T, found in Xanthomonas axonopodis pv. citri (strain 306).